Reading from the N-terminus, the 69-residue chain is Large ribosomal subunit protein bL31 (69 aa).

Zn(2+) is bound by residues Cys17, Cys19, Cys37, and Cys40.

Belongs to the bacterial ribosomal protein bL31 family. Type A subfamily. In terms of assembly, part of the 50S ribosomal subunit. The cofactor is Zn(2+).

Binds the 23S rRNA. This Thermoanaerobacter pseudethanolicus (strain ATCC 33223 / 39E) (Clostridium thermohydrosulfuricum) protein is Large ribosomal subunit protein bL31.